We begin with the raw amino-acid sequence, 400 residues long: Nicotinate phosphoribosyltransferase (400 aa).

Position 220 is a phosphohistidine; by autocatalysis (H220).

This sequence belongs to the NAPRTase family. Transiently phosphorylated on a His residue during the reaction cycle. Phosphorylation strongly increases the affinity for substrates and increases the rate of nicotinate D-ribonucleotide production. Dephosphorylation regenerates the low-affinity form of the enzyme, leading to product release.

The enzyme catalyses nicotinate + 5-phospho-alpha-D-ribose 1-diphosphate + ATP + H2O = nicotinate beta-D-ribonucleotide + ADP + phosphate + diphosphate. It participates in cofactor biosynthesis; NAD(+) biosynthesis; nicotinate D-ribonucleotide from nicotinate: step 1/1. Functionally, catalyzes the synthesis of beta-nicotinate D-ribonucleotide from nicotinate and 5-phospho-D-ribose 1-phosphate at the expense of ATP. The sequence is that of Nicotinate phosphoribosyltransferase from Cronobacter sakazakii (strain ATCC BAA-894) (Enterobacter sakazakii).